A 653-amino-acid polypeptide reads, in one-letter code: Dystrotelin (653 aa).

The segment at 223–279 (THPVRCSVCRTFPIIGLRYHCLKCLDFDICELCFLSGLHKNSHEKSHTVMEECVQMS) adopts a ZZ-type zinc-finger fold. Residues Cys-228, Cys-231, Cys-243, Cys-246, Cys-252, Cys-255, His-265, and His-269 each contribute to the Zn(2+) site. Residues 384 to 411 (RDSLNTLLRERRLLRKQLHRYKQKLQGT) are a coiled coil.

In terms of tissue distribution, strongly expressed in the nervous and muscular tissues.

The protein localises to the cell membrane. In Mus musculus (Mouse), this protein is Dystrotelin (Dytn).